Reading from the N-terminus, the 399-residue chain is Phosphoglycerate kinase (399 aa).

Substrate is bound by residues 24–26, Arg39, 62–65, Arg121, and Arg154; these read DYN and HLGR. Residues Lys204, Gly295, Glu326, and 355–358 contribute to the ATP site; that span reads GGDS.

It belongs to the phosphoglycerate kinase family. As to quaternary structure, monomer.

The protein localises to the cytoplasm. It carries out the reaction (2R)-3-phosphoglycerate + ATP = (2R)-3-phospho-glyceroyl phosphate + ADP. It functions in the pathway carbohydrate degradation; glycolysis; pyruvate from D-glyceraldehyde 3-phosphate: step 2/5. In Elusimicrobium minutum (strain Pei191), this protein is Phosphoglycerate kinase.